Reading from the N-terminus, the 200-residue chain is Probable molybdenum cofactor guanylyltransferase (200 aa).

Residues 9-11 (LAG), lysine 21, aspartate 69, and aspartate 100 contribute to the GTP site. Aspartate 100 is a Mg(2+) binding site.

It belongs to the MobA family. The cofactor is Mg(2+).

It is found in the cytoplasm. It carries out the reaction Mo-molybdopterin + GTP + H(+) = Mo-molybdopterin guanine dinucleotide + diphosphate. Transfers a GMP moiety from GTP to Mo-molybdopterin (Mo-MPT) cofactor (Moco or molybdenum cofactor) to form Mo-molybdopterin guanine dinucleotide (Mo-MGD) cofactor. This is Probable molybdenum cofactor guanylyltransferase from Bacillus cereus (strain Q1).